The primary structure comprises 526 residues: Peptide chain release factor 3 (526 aa).

Positions 9 to 277 (NKRRTFAIIS…DFVEYAPGPQ (269 aa)) constitute a tr-type G domain. Residues 18-25 (SHPDAGKT), 86-90 (DTPGH), and 140-143 (NKLD) each bind GTP.

Belongs to the TRAFAC class translation factor GTPase superfamily. Classic translation factor GTPase family. PrfC subfamily.

It is found in the cytoplasm. In terms of biological role, increases the formation of ribosomal termination complexes and stimulates activities of RF-1 and RF-2. It binds guanine nucleotides and has strong preference for UGA stop codons. It may interact directly with the ribosome. The stimulation of RF-1 and RF-2 is significantly reduced by GTP and GDP, but not by GMP. The chain is Peptide chain release factor 3 from Legionella pneumophila (strain Corby).